Consider the following 193-residue polypeptide: Ion-translocating oxidoreductase complex subunit A (193 aa).

6 consecutive transmembrane segments (helical) span residues 5–25 (LLLF…FLGL), 47–67 (FVMT…LVPL), 72–92 (LRTM…EMVV), 102–122 (LLGI…VALL), 134–154 (ALYG…FAAI), and 171–191 (AIAL…SGLV).

This sequence belongs to the NqrDE/RnfAE family. As to quaternary structure, the complex is composed of six subunits: RnfA, RnfB, RnfC, RnfD, RnfE and RnfG.

It is found in the cell inner membrane. Its function is as follows. Part of a membrane-bound complex that couples electron transfer with translocation of ions across the membrane. The sequence is that of Ion-translocating oxidoreductase complex subunit A from Cronobacter sakazakii (strain ATCC BAA-894) (Enterobacter sakazakii).